Here is a 226-residue protein sequence, read N- to C-terminus: Biosynthetic peptidoglycan transglycosylase (226 aa).

A helical membrane pass occupies residues 7 to 29 (VMALSAIGLLLLPYLLTPLYRIG).

This sequence belongs to the glycosyltransferase 51 family.

It is found in the cell inner membrane. The catalysed reaction is [GlcNAc-(1-&gt;4)-Mur2Ac(oyl-L-Ala-gamma-D-Glu-L-Lys-D-Ala-D-Ala)](n)-di-trans,octa-cis-undecaprenyl diphosphate + beta-D-GlcNAc-(1-&gt;4)-Mur2Ac(oyl-L-Ala-gamma-D-Glu-L-Lys-D-Ala-D-Ala)-di-trans,octa-cis-undecaprenyl diphosphate = [GlcNAc-(1-&gt;4)-Mur2Ac(oyl-L-Ala-gamma-D-Glu-L-Lys-D-Ala-D-Ala)](n+1)-di-trans,octa-cis-undecaprenyl diphosphate + di-trans,octa-cis-undecaprenyl diphosphate + H(+). It participates in cell wall biogenesis; peptidoglycan biosynthesis. Peptidoglycan polymerase that catalyzes glycan chain elongation from lipid-linked precursors. This Nitrobacter winogradskyi (strain ATCC 25391 / DSM 10237 / CIP 104748 / NCIMB 11846 / Nb-255) protein is Biosynthetic peptidoglycan transglycosylase.